The primary structure comprises 841 residues: Translation initiation factor IF-2 (841 aa).

The disordered stretch occupies residues 87 to 254 (RKKKVFVQRS…KRNAHGFQSP (168 aa)). Residues 96–135 (SPEEIEAERKREMDERRAVENAARQKAEEEAKRRAEEDAR) show a composition bias toward basic and acidic residues. Residues 136–175 (SQPAASQSAPAAAEPVAAAEPVREAAPAAAPAPASAAPSA) are compositionally biased toward low complexity. 2 stretches are compositionally biased toward basic and acidic residues: residues 176 to 217 (DARK…EKAP) and 225 to 234 (TTDEESDSFR). A compositionally biased stretch (basic residues) spans 235–248 (RGGRGKGKLKKRNA). One can recognise a tr-type G domain in the interval 341 to 510 (SRAPVVTVMG…LLQAEVLELK (170 aa)). Residues 350-357 (GHVDHGKT) are G1. Position 350 to 357 (350 to 357 (GHVDHGKT)) interacts with GTP. The segment at 375–379 (GITQH) is G2. The interval 396–399 (DTPG) is G3. Residues 396 to 400 (DTPGH) and 450 to 453 (NKID) each bind GTP. The interval 450–453 (NKID) is G4. A G5 region spans residues 486 to 488 (SAK).

The protein belongs to the TRAFAC class translation factor GTPase superfamily. Classic translation factor GTPase family. IF-2 subfamily.

The protein resides in the cytoplasm. Functionally, one of the essential components for the initiation of protein synthesis. Protects formylmethionyl-tRNA from spontaneous hydrolysis and promotes its binding to the 30S ribosomal subunits. Also involved in the hydrolysis of GTP during the formation of the 70S ribosomal complex. The protein is Translation initiation factor IF-2 of Pseudomonas syringae pv. syringae (strain B728a).